The chain runs to 112 residues: Putative pterin-4-alpha-carbinolamine dehydratase (112 aa).

It belongs to the pterin-4-alpha-carbinolamine dehydratase family.

It catalyses the reaction (4aS,6R)-4a-hydroxy-L-erythro-5,6,7,8-tetrahydrobiopterin = (6R)-L-erythro-6,7-dihydrobiopterin + H2O. This Shewanella woodyi (strain ATCC 51908 / MS32) protein is Putative pterin-4-alpha-carbinolamine dehydratase.